The primary structure comprises 646 residues: Interferon-induced GTP-binding protein MxA (646 aa).

The Dynamin-type G domain occupies 34–307 (DLALPAIAVI…LVHHIQKSLP (274 aa)). Residues 44–51 (GDQSSGKS) form a G1 motif region. GTP is bound at residue 44-51 (GDQSSGKS). The tract at residues 69-71 (VTR) is G2 motif. Residues 145-148 (DLPG) form a G3 motif region. GTP-binding positions include 145 to 149 (DLPGI) and 214 to 217 (TKPD). Positions 214–217 (TKPD) are G4 motif. Residues 246–249 (RCRG) form a G5 motif region. Residues 546 to 637 (LREMRLHLKS…PLGHLLEVTF (92 aa)) enclose the GED domain.

This sequence belongs to the TRAFAC class dynamin-like GTPase superfamily. Dynamin/Fzo/YdjA family.

The protein resides in the cytoplasm. In Danio rerio (Zebrafish), this protein is Interferon-induced GTP-binding protein MxA (mxa).